Reading from the N-terminus, the 132-residue chain is Small ribosomal subunit protein uS8 (132 aa).

This sequence belongs to the universal ribosomal protein uS8 family. Part of the 30S ribosomal subunit. Contacts proteins S5 and S12.

Its function is as follows. One of the primary rRNA binding proteins, it binds directly to 16S rRNA central domain where it helps coordinate assembly of the platform of the 30S subunit. This chain is Small ribosomal subunit protein uS8, found in Rickettsia bellii (strain OSU 85-389).